A 73-amino-acid polypeptide reads, in one-letter code: Gas vesicle protein A (73 aa).

Belongs to the gas vesicle GvpA family. The gas vesicle shell is 2 nm thick and consists of a single layer of this protein. It forms helical ribs nearly perpendicular to the long axis of the vesicle.

It is found in the gas vesicle shell. Its function is as follows. Gas vesicles are hollow, gas filled proteinaceous nanostructures found in some microorganisms. During planktonic growth they allow positioning of the organism at a favorable depth for light or nutrient acquisition. GvpA forms the protein shell. In Nostoc punctiforme (strain ATCC 29133 / PCC 73102), this protein is Gas vesicle protein A.